Here is a 305-residue protein sequence, read N- to C-terminus: tRNA dimethylallyltransferase (305 aa).

8 to 15 (GPTGTGKS) is an ATP binding site. 10 to 15 (TGTGKS) provides a ligand contact to substrate.

The protein belongs to the IPP transferase family. In terms of assembly, monomer. Mg(2+) serves as cofactor.

It catalyses the reaction adenosine(37) in tRNA + dimethylallyl diphosphate = N(6)-dimethylallyladenosine(37) in tRNA + diphosphate. Functionally, catalyzes the transfer of a dimethylallyl group onto the adenine at position 37 in tRNAs that read codons beginning with uridine, leading to the formation of N6-(dimethylallyl)adenosine (i(6)A). This is tRNA dimethylallyltransferase from Mycobacterium sp. (strain KMS).